We begin with the raw amino-acid sequence, 306 residues long: 4-hydroxy-3-methylbut-2-enyl diphosphate reductase (306 aa).

Position 12 (Cys12) interacts with [4Fe-4S] cluster. (2E)-4-hydroxy-3-methylbut-2-enyl diphosphate-binding residues include His41 and His74. The dimethylallyl diphosphate site is built by His41 and His74. His41 and His74 together coordinate isopentenyl diphosphate. A [4Fe-4S] cluster-binding site is contributed by Cys96. A (2E)-4-hydroxy-3-methylbut-2-enyl diphosphate-binding site is contributed by His124. Residue His124 coordinates dimethylallyl diphosphate. Residue His124 participates in isopentenyl diphosphate binding. Glu126 functions as the Proton donor in the catalytic mechanism. Residue Thr164 coordinates (2E)-4-hydroxy-3-methylbut-2-enyl diphosphate. Cys194 contributes to the [4Fe-4S] cluster binding site. (2E)-4-hydroxy-3-methylbut-2-enyl diphosphate contacts are provided by Ser222, Ser223, Asn224, and Ser266. Positions 222, 223, 224, and 266 each coordinate dimethylallyl diphosphate. 4 residues coordinate isopentenyl diphosphate: Ser222, Ser223, Asn224, and Ser266.

The protein belongs to the IspH family. The cofactor is [4Fe-4S] cluster.

The enzyme catalyses isopentenyl diphosphate + 2 oxidized [2Fe-2S]-[ferredoxin] + H2O = (2E)-4-hydroxy-3-methylbut-2-enyl diphosphate + 2 reduced [2Fe-2S]-[ferredoxin] + 2 H(+). It carries out the reaction dimethylallyl diphosphate + 2 oxidized [2Fe-2S]-[ferredoxin] + H2O = (2E)-4-hydroxy-3-methylbut-2-enyl diphosphate + 2 reduced [2Fe-2S]-[ferredoxin] + 2 H(+). Its pathway is isoprenoid biosynthesis; dimethylallyl diphosphate biosynthesis; dimethylallyl diphosphate from (2E)-4-hydroxy-3-methylbutenyl diphosphate: step 1/1. It functions in the pathway isoprenoid biosynthesis; isopentenyl diphosphate biosynthesis via DXP pathway; isopentenyl diphosphate from 1-deoxy-D-xylulose 5-phosphate: step 6/6. Functionally, catalyzes the conversion of 1-hydroxy-2-methyl-2-(E)-butenyl 4-diphosphate (HMBPP) into a mixture of isopentenyl diphosphate (IPP) and dimethylallyl diphosphate (DMAPP). Acts in the terminal step of the DOXP/MEP pathway for isoprenoid precursor biosynthesis. This is 4-hydroxy-3-methylbut-2-enyl diphosphate reductase from Ruthia magnifica subsp. Calyptogena magnifica.